The sequence spans 204 residues: Ciliary microtubule inner protein 7 (204 aa).

It localises to the cell projection. The protein localises to the cilium. The polypeptide is Ciliary microtubule inner protein 7 (Homo sapiens (Human)).